Reading from the N-terminus, the 286-residue chain is Shikimate dehydrogenase (NADP(+)) (286 aa).

Shikimate is bound by residues 22–24 (SRS) and Thr71. Lys75 (proton acceptor) is an active-site residue. Residue Glu87 participates in NADP(+) binding. Residues Asn96 and Asp111 each contribute to the shikimate site. NADP(+) contacts are provided by residues 136–140 (GAGGA), 160–165 (NRTPER), and Ile225. Tyr227 serves as a coordination point for shikimate. NADP(+) is bound at residue Gly248.

The protein belongs to the shikimate dehydrogenase family. In terms of assembly, homodimer.

It carries out the reaction shikimate + NADP(+) = 3-dehydroshikimate + NADPH + H(+). Its pathway is metabolic intermediate biosynthesis; chorismate biosynthesis; chorismate from D-erythrose 4-phosphate and phosphoenolpyruvate: step 4/7. Involved in the biosynthesis of the chorismate, which leads to the biosynthesis of aromatic amino acids. Catalyzes the reversible NADPH linked reduction of 3-dehydroshikimate (DHSA) to yield shikimate (SA). This Rhizobium meliloti (strain 1021) (Ensifer meliloti) protein is Shikimate dehydrogenase (NADP(+)).